The chain runs to 344 residues: Glycerol-3-phosphate dehydrogenase [NAD(P)+] 2 (344 aa).

Residues S12, W13, R33, R34, and K107 each coordinate NADPH. Residues K107, G138, and S140 each coordinate sn-glycerol 3-phosphate. An NADPH-binding site is contributed by A142. Residues K193, D246, S256, R257, and N258 each coordinate sn-glycerol 3-phosphate. K193 acts as the Proton acceptor in catalysis. Residue R257 coordinates NADPH. Positions 281 and 283 each coordinate NADPH.

It belongs to the NAD-dependent glycerol-3-phosphate dehydrogenase family.

The protein localises to the cytoplasm. The enzyme catalyses sn-glycerol 3-phosphate + NAD(+) = dihydroxyacetone phosphate + NADH + H(+). It catalyses the reaction sn-glycerol 3-phosphate + NADP(+) = dihydroxyacetone phosphate + NADPH + H(+). It participates in membrane lipid metabolism; glycerophospholipid metabolism. In terms of biological role, catalyzes the reduction of the glycolytic intermediate dihydroxyacetone phosphate (DHAP) to sn-glycerol 3-phosphate (G3P), the key precursor for phospholipid synthesis. The polypeptide is Glycerol-3-phosphate dehydrogenase [NAD(P)+] 2 (Salinibacter ruber (strain DSM 13855 / M31)).